The sequence spans 375 residues: 4,4'-diaponeurosporenoate glycosyltransferase (375 aa).

4 helical membrane-spanning segments follow: residues 3 to 23 (WLSR…ALIF), 164 to 184 (FYEG…NVFS), 277 to 297 (IMAA…GLCL), and 330 to 350 (FSNL…KIFI).

The protein belongs to the glycosyltransferase 2 family. CrtQ subfamily.

Its subcellular location is the cell membrane. It functions in the pathway carotenoid biosynthesis; staphyloxanthin biosynthesis; staphyloxanthin from farnesyl diphosphate: step 4/5. Its function is as follows. Catalyzes the glycosylation of 4,4'-diaponeurosporenoate, i.e. the esterification of glucose at the C1'' position with the carboxyl group of 4,4'-diaponeurosporenic acid, to form glycosyl-4,4'-diaponeurosporenoate. This is a step in the biosynthesis of staphyloxanthin, an orange pigment present in most staphylococci strains. The polypeptide is 4,4'-diaponeurosporenoate glycosyltransferase (crtQ) (Staphylococcus aureus (strain MRSA252)).